A 319-amino-acid polypeptide reads, in one-letter code: Dehydrogenase/reductase SDR family member 9 (319 aa).

The first 17 residues, 1–17 (MLFWLLVLLILCGFLWN), serve as a signal peptide directing secretion. Residues 34–58 (ITGCDTGFGNLAARTFDKKGFHVIA) and aspartate 83 each bind NAD(+). A substrate-binding site is contributed by serine 164. Residue tyrosine 176 is the Proton acceptor of the active site. Lysine 180 provides a ligand contact to NAD(+).

It belongs to the short-chain dehydrogenases/reductases (SDR) family. As to quaternary structure, homotetramer.

The protein resides in the microsome membrane. The protein localises to the endoplasmic reticulum membrane. The enzyme catalyses 3beta-hydroxy-5alpha-pregnane-20-one + NAD(+) = 5alpha-pregnane-3,20-dione + NADH + H(+). It carries out the reaction 17beta-hydroxy-5alpha-androstan-3-one + NAD(+) = 5alpha-androstan-3,17-dione + NADH + H(+). The catalysed reaction is androsterone + NAD(+) = 5alpha-androstan-3,17-dione + NADH + H(+). It catalyses the reaction 5alpha-androstane-3alpha,17beta-diol + NAD(+) = 17beta-hydroxy-5alpha-androstan-3-one + NADH + H(+). The enzyme catalyses all-trans-retinol + NAD(+) = all-trans-retinal + NADH + H(+). It carries out the reaction 3alpha-hydroxy-5alpha-pregnan-20-one + NAD(+) = 5alpha-pregnane-3,20-dione + NADH + H(+). 3-alpha-hydroxysteroid dehydrogenase that converts 3-alpha-tetrahydroprogesterone (allopregnanolone) to dihydroxyprogesterone and 3-alpha-androstanediol to dihydroxyprogesterone. Also plays a role in the biosynthesis of retinoic acid from retinaldehyde. Can utilize both NADH and NADPH. This is Dehydrogenase/reductase SDR family member 9 (DHRS9) from Bos taurus (Bovine).